The sequence spans 555 residues: MARVEL domain-containing protein 2 (555 aa).

Basic and acidic residues predominate over residues 1–20 (MSSSDARSRIRDRGYSEVPR). A disordered region spans residues 1-71 (MSSSDARSRI…FYSSDTEEPA (71 aa)). At 1-191 (MSSSDARSRI…YMKSWAGLLR (191 aa)) the chain is on the cytoplasmic side. The segment covering 46–59 (PLPPPPLPLQPPFG) has biased composition (pro residues). Phosphoserine occurs at positions 117, 121, and 158. A disordered region spans residues 118–142 (PPASPARANHHPYKDPSRGSQGTFN). Position 163 is a phosphothreonine (Thr163). An MARVEL domain is found at 185–364 (SWAGLLRILG…SALVCLKLWR (180 aa)). Residues 192 to 212 (ILGVVELLLGAGVFACVTAYI) form a helical membrane-spanning segment. At 213-251 (HKDNEWYNLFGYTQPYGMGGLGSLGNTYGGYYYSGPKTP) the chain is on the extracellular side. Residues 252–272 (FVLVVAGLAWITTIIILVLGM) form a helical membrane-spanning segment. Topologically, residues 273–288 (SMYYRTILLDSNWWPL) are cytoplasmic. The helical transmembrane segment at 289-309 (TEFGVNVALFILYMAAAIVYV) threads the bilayer. Residues 310–338 (NDTNRGGLCYYPLFNTPMNAMFCRVEGGQ) are Extracellular-facing. The helical transmembrane segment at 339-359 (IAAMIFLFVTMIVYLVSALVC) threads the bilayer. Residues 360-555 (LKLWRHEAAR…VMNWDTQGYP (196 aa)) are Cytoplasmic-facing. At Ser384 the chain carries Phosphoserine. Residue Lys408 forms a Glycyl lysine isopeptide (Lys-Gly) (interchain with G-Cter in ubiquitin) linkage. The OCEL domain occupies 437–548 (PDYVAKYPVI…RIQEYDKVMN (112 aa)). Residues 521–545 (EKKERCDYLKNKLSHIKQRIQEYDK) are a coiled coil.

The protein belongs to the ELL/occludin family. As to quaternary structure, interacts with TJP1. Interacts with the ubiquitin ligase ITCH. Interacts (via C-terminal cytoplasmic domain) with LSR (via the cytoplasmic domain), ILDR1 and ILDR2; the interaction is required to recruit MARVELD2 to tricellular contacts. Ubiquitinated by ITCH; but this ubiquitination does not lead to proteasomal degradation. Polyubiquitinated at Lys-408 via 'Lys-63'-linked ubiquitin chains; deubiquitinated by USP53. Post-translationally, phosphorylated. As to expression, detected in small intestine, stomach and kidney, in epithelial cells. Detected in pancreas, retina and lung, and in stria vascularis, utricle and the organ of Conti in the inner ear (at protein level). Predominantly detected in small intestine, lung and kidney, with lower levels in liver, testis and brain. In colon, expressed in the entire crypts.

The protein resides in the cell membrane. It localises to the cell junction. Its subcellular location is the tight junction. Its function is as follows. Plays a role in the formation of tricellular tight junctions and of epithelial barriers. Required for normal hearing via its role in the separation of the endolymphatic and perilymphatic spaces of the organ of Corti in the inner ear, and for normal survival of hair cells in the organ of Corti. The protein is MARVEL domain-containing protein 2 of Mus musculus (Mouse).